A 479-amino-acid polypeptide reads, in one-letter code: Dynein regulatory complex subunit 4 (479 aa).

Coiled-coil stretches lie at residues 28–93, 117–170, and 210–347; these read RDQL…LADI, RAEA…FNEK, and EVEE…GLKE.

This sequence belongs to the DRC4 family.

The protein resides in the cytoplasm. It localises to the cytoskeleton. Its subcellular location is the flagellum basal body. Functionally, cytoskeletal linker which probably functions in axonemal and non-axonemal dynein regulation. May play a role in the spermatozoa motility. The sequence is that of Dynein regulatory complex subunit 4 from Drosophila melanogaster (Fruit fly).